The primary structure comprises 277 residues: Intercellular adhesion molecule 2 (277 aa).

Positions Met-1–Glu-22 are cleaved as a signal peptide. Residues Lys-23–Gln-222 are Extracellular-facing. 2 Ig-like C2-type domains span residues Thr-39–Lys-98 and Gly-127–Arg-196. Asn-45, Asn-82, Asn-158, Asn-176, and Asn-186 each carry an N-linked (GlcNAc...) asparagine glycan. 3 cysteine pairs are disulfide-bonded: Cys-46–Cys-91, Cys-50–Cys-95, and Cys-134–Cys-189. The chain crosses the membrane as a helical span at residues Met-223–Phe-247. The Cytoplasmic portion of the chain corresponds to Gly-248–Val-277. A required for interaction with EZR, MSN and RDX and co-localization to microvilli region spans residues His-250–Val-277.

The protein belongs to the immunoglobulin superfamily. ICAM family. Interacts with RDX, EZR and MSN. Expressed in endothelial cells and leukocytes. High levels found in lung.

The protein resides in the membrane. It localises to the cell projection. The protein localises to the microvillus. In terms of biological role, ICAM proteins are ligands for the leukocyte adhesion protein LFA-1 (integrin alpha-L/beta-2). ICAM2 may play a role in lymphocyte recirculation by blocking LFA-1-dependent cell adhesion. It mediates adhesive interactions important for antigen-specific immune response, NK-cell mediated clearance, lymphocyte recirculation, and other cellular interactions important for immune response and surveillance. The chain is Intercellular adhesion molecule 2 (Icam2) from Mus musculus (Mouse).